The following is a 193-amino-acid chain: Cerebellin-1 (193 aa).

Residues 1 to 21 form the signal peptide; it reads MLGVVELLLLGAAWLAGPARG. Residue Asn23 is glycosylated (N-linked (GlcNAc...) asparagine). Residues 34–38 form an essential for interaction with NRXN1 and linker of two C1q trimers into disulfide-linked hexamers region; it reads CLVVC. The region spanning 57–193 is the C1q domain; the sequence is SGSAKVAFSA…TFSGFLVFPL (137 aa). Residues 62–193 form a necessary for interaction with CBLN3, and homotrimerization region; the sequence is VAFSAIRSTN…TFSGFLVFPL (132 aa). A glycan (N-linked (GlcNAc...) asparagine) is linked at Asn79. The essential for interaction with GRID2 stretch occupies residues 122–147; sequence YNRQTIQVSLMLNGWPVISAFAGDQD.

In terms of assembly, homohexamer; disulfide-linked homotrimers. The trimers are assembled via the globular C1q domains. The trimers associate via N-terminal cysteine residues to form disulfide-linked hexamers. May form oligomers with CBLN2, CBLN3 and CBLN4 prior to secretion. Once secreted, does not interact with other CBLN family members. Interacts with GRID1. Interacts with NRXN1 and NRXN2 long (alpha) and short (beta) isoforms produced by alternative promoter usage. Competes with NLGN1 for NRXN1-binding. Weakly interacts with NRXN3 short isoform and not at all with NRXN3 long isoform. Interacts (via C1q domain) with GRID2; GRID2-binding is calcium-independent; CBLN1 hexamers anchor GRID2 N-terminal domain dimers to monomeric NRXN1 isoform beta; promotes synaptogenesis and mediates the D-Serine-dependent long term depression signals and AMPA receptor endocytosis. The proteolytic processing to yield cerebellin seems to occur either prior to the secretion by presynaptic neurons and subsequent oligomerization or in some other location after release of the mature protein. Post-translationally, sialoglycoprotein.

The protein resides in the secreted. It is found in the postsynaptic cell membrane. Functionally, required for synapse integrity and synaptic plasticity. During cerebellar synapse formation, essential for the matching and maintenance of pre- and post-synaptic elements at parallel fiber-Purkinje cell synapses, the establishment of the proper pattern of climbing fiber-Purkinje cell innervation, and induction of long-term depression at parallel fiber-Purkinje cell synapses. Plays a role as a synaptic organizer that acts bidirectionally on both pre- and post-synaptic components. On the one hand induces accumulation of synaptic vesicles in the pre-synaptic part by binding with NRXN1 and in other hand induces clustering of GRID2 and its associated proteins at the post-synaptic site through association of GRID2. NRXN1-CBLN1-GRID2 complex directly induces parallel fiber protrusions that encapsulate spines of Purkinje cells leading to accumulation of GRID2 and synaptic vesicles. Required for CBLN3 export from the endoplasmic reticulum and secretion. NRXN1-CBLN1-GRID2 complex mediates the D-Serine-dependent long term depression signals and AMPA receptor endocytosis. Essential for long-term maintenance but not establishment of excitatory synapses. Inhibits the formation and function of inhibitory GABAergic synapses in cerebellar Purkinje cells. In terms of biological role, the cerebellin peptide exerts neuromodulatory functions. Directly stimulates norepinephrine release via the adenylate cyclase/PKA-dependent signaling pathway; and indirectly enhances adrenocortical secretion in vivo, through a paracrine mechanism involving medullary catecholamine release. This is Cerebellin-1 from Bos taurus (Bovine).